The primary structure comprises 170 residues: Large ribosomal subunit protein bL17 (170 aa).

It belongs to the bacterial ribosomal protein bL17 family. Part of the 50S ribosomal subunit. Contacts protein L32.

The protein is Large ribosomal subunit protein bL17 of Azobacteroides pseudotrichonymphae genomovar. CFP2.